A 178-amino-acid chain; its full sequence is Cyclin-dependent kinase inhibitor 1B (178 aa).

The segment covering 1–11 (MSNVRVSNGSP) has biased composition (polar residues). A disordered region spans residues 1–31 (MSNVRVSNGSPSLERMDARQAEYPKPSACRN). At Ser10 the chain carries Phosphoserine; by UHMK1. An interaction with CDK2 region spans residues 51-91 (DMEEASQRKWNFDFQNHKPLEGKYEWQEVEKGSLPEFYYRP). Phosphotyrosine; by SRC is present on Tyr74. The interval 87-178 (FYYRPPRPPK…RTEENVSDGS (92 aa)) is disordered. Tyr88 is subject to Phosphotyrosine; by ABL, LYN, SRC and JAK2. Tyr89 carries the phosphotyrosine modification. Polar residues predominate over residues 104-113 (QESQDVSGTR). Over residues 126-137 (EDTHLVDQKTDT) the composition is skewed to basic and acidic residues. A Nuclear localization signal motif is present at residues 153-169 (KRPATDDSSPQNKRANR). A Phosphothreonine; by CaMK1, PKB/AKT1, RPS6KA1, RPS6KA3 and PIM1 modification is found at Thr157. Thr170 is subject to Phosphothreonine.

The protein belongs to the CDI family. In terms of assembly, forms a ternary complex composed of CCNE1, CDK2 and CDKN1B. Interacts directly with CCNE1; the interaction is inhibited by CDK2-dependent phosphorylation. Interacts with COPS5, subunit of the COP9 signalosome complex; the interaction leads to CDKN1B degradation. Interacts with NUP50; the interaction leads to nuclear import and degradation of phosphorylated CDKN1B. Interacts with CCND1 and SNX6. Interacts (Thr-198-phosphorylated form) with 14-3-3 proteins, binds strongly YWHAQ, weakly YWHAE and YWHAH, but not YWHAB nor YWHAZ; the interaction with YWHAQ results in translocation to the cytoplasm. Interacts with AKT1 and LYN; the interactions lead to cytoplasmic mislocation, phosphorylation of CDKN1B and inhibition of cell cycle arrest. Forms a ternary complex with CCNA2 and CDK2; CDKN1B inhibits the kinase activity of CDK2 through conformational rearrangements. Interacts (unphosphorylated form) with CDK2. Forms a complex with CDK2 and SPDYA, but does not directly interact with SPDYA. Forms a ternary complex composed of cyclin D, CDK4 and CDKN1B. Interacts (phosphorylated on Tyr-88 and Tyr-89) with CDK4; the interaction is required for cyclin D and CDK4 complex assembly, induces nuclear translocation and activates the CDK4 kinase activity. Interacts with GRB2. Interacts with PIM1. Identified in a complex with SKP1, SKP2 and CKS1B. Interacts with UHMK1; the interaction leads to cytoplasmic mislocation, phosphorylation of CDKN1B and inhibition of cell cycle arrest. Also interacts with CDK1. Dephosphorylated by PPM1H, leading to CDKN1B stability. Phosphorylated; phosphorylation occurs on serine, threonine and tyrosine residues. Phosphorylation on Ser-10 is the major site of phosphorylation in resting cells, takes place at the G(0)-G(1) phase and leads to protein stability. Phosphorylation on other sites is greatly enhanced by mitogens, growth factors, MYC and in certain cancer cell lines. The phosphorylated form found in the cytoplasm is inactivate. Phosphorylation on Tyr-88 has no effect on binding CDK complexes. Post-translationally, ubiquitinated; in the cytoplasm by the KPC complex (composed of RNF123/KPC1 and UBAC1/KPC2) and, in the nucleus, by SCF(SKP2). The latter requires prior phosphorylation on Thr-187. Ubiquitinated; by a TRIM21-containing SCF(SKP2)-like complex; leads to its degradation. In terms of processing, subject to degradation in the lysosome. Interaction with SNX6 promotes lysosomal degradation.

The protein localises to the nucleus. It is found in the cytoplasm. Its subcellular location is the endosome. Important regulator of cell cycle progression. Inhibits the kinase activity of CDK2 bound to cyclin A, but has little inhibitory activity on CDK2 bound to SPDYA. Involved in G1 arrest. Potent inhibitor of cyclin E- and cyclin A-CDK2 complexes. Forms a complex with cyclin type D-CDK4 complexes and is involved in the assembly, stability, and modulation of CCND1-CDK4 complex activation. Acts either as an inhibitor or an activator of cyclin type D-CDK4 complexes depending on its phosphorylation state and/or stoichometry. The polypeptide is Cyclin-dependent kinase inhibitor 1B (CDKN1B) (Neovison vison (American mink)).